Reading from the N-terminus, the 219-residue chain is NADH-ubiquinone oxidoreductase 23 kDa subunit, mitochondrial (219 aa).

2 consecutive 4Fe-4S ferredoxin-type domains span residues 111-140 (RRYP…IEAE) and 150-179 (TRYD…ESPN). 8 residues coordinate [4Fe-4S] cluster: C120, C123, C126, C130, C159, C162, C165, and C169.

It belongs to the complex I 23 kDa subunit family. As to quaternary structure, complex I is composed of about 40 different subunits. [4Fe-4S] cluster is required as a cofactor.

The protein localises to the mitochondrion. It catalyses the reaction a ubiquinone + NADH + 5 H(+)(in) = a ubiquinol + NAD(+) + 4 H(+)(out). In terms of biological role, core subunit of the mitochondrial membrane respiratory chain NADH dehydrogenase (Complex I) that is believed to belong to the minimal assembly required for catalysis. Complex I functions in the transfer of electrons from NADH to the respiratory chain. The immediate electron acceptor for the enzyme is believed to be ubiquinone. May donate electrons to ubiquinone. The sequence is that of NADH-ubiquinone oxidoreductase 23 kDa subunit, mitochondrial (nuo21.3c) from Neurospora crassa (strain ATCC 24698 / 74-OR23-1A / CBS 708.71 / DSM 1257 / FGSC 987).